Here is a 226-residue protein sequence, read N- to C-terminus: MKNIQKILPLYFVAGTQDCRHLGENLSENLLFVLKQALEGGITCFQFRDKGKFSLEHTPSAQKALAMSCRDLCREYGVPFIVDDNVDLALEIEADGIHVGQSDMPVQEIRAKTDKPLIIGWSVNRLDEAKIGENLAEIDYFGIGPIFPTQSKENPKPTLGMAFIQTLRNVGITKPLVAIGGVKLAHVKTLREFGADGVAVITAITHADNVQAATKALREASDEYAK.

4-amino-2-methyl-5-(diphosphooxymethyl)pyrimidine is bound by residues glutamine 46–lysine 50 and aspartate 83. 2 residues coordinate Mg(2+): aspartate 84 and aspartate 103. Serine 122 contacts 4-amino-2-methyl-5-(diphosphooxymethyl)pyrimidine. Residue threonine 149–serine 151 participates in 2-[(2R,5Z)-2-carboxy-4-methylthiazol-5(2H)-ylidene]ethyl phosphate binding. Position 152 (lysine 152) interacts with 4-amino-2-methyl-5-(diphosphooxymethyl)pyrimidine. Residues glycine 181 and isoleucine 201–threonine 202 contribute to the 2-[(2R,5Z)-2-carboxy-4-methylthiazol-5(2H)-ylidene]ethyl phosphate site.

This sequence belongs to the thiamine-phosphate synthase family. It depends on Mg(2+) as a cofactor.

It catalyses the reaction 2-[(2R,5Z)-2-carboxy-4-methylthiazol-5(2H)-ylidene]ethyl phosphate + 4-amino-2-methyl-5-(diphosphooxymethyl)pyrimidine + 2 H(+) = thiamine phosphate + CO2 + diphosphate. It carries out the reaction 2-(2-carboxy-4-methylthiazol-5-yl)ethyl phosphate + 4-amino-2-methyl-5-(diphosphooxymethyl)pyrimidine + 2 H(+) = thiamine phosphate + CO2 + diphosphate. The enzyme catalyses 4-methyl-5-(2-phosphooxyethyl)-thiazole + 4-amino-2-methyl-5-(diphosphooxymethyl)pyrimidine + H(+) = thiamine phosphate + diphosphate. Its pathway is cofactor biosynthesis; thiamine diphosphate biosynthesis; thiamine phosphate from 4-amino-2-methyl-5-diphosphomethylpyrimidine and 4-methyl-5-(2-phosphoethyl)-thiazole: step 1/1. Condenses 4-methyl-5-(beta-hydroxyethyl)thiazole monophosphate (THZ-P) and 2-methyl-4-amino-5-hydroxymethyl pyrimidine pyrophosphate (HMP-PP) to form thiamine monophosphate (TMP). This Haemophilus influenzae (strain 86-028NP) protein is Thiamine-phosphate synthase.